Here is a 474-residue protein sequence, read N- to C-terminus: MTQKLHIKTWGCQMNEYDSSKMADLLLNTHGLELTDVPEEADVLLLNTCSIREKAQEKVFHQLGRWKELKKQNPSLVIGVGGCVASQEGEHIRSRAPYVDIVFGPQTLHRLPEMINQIRGGKSAVVDVSFPEIEKFDRLPEPRAEGPTAFVSIMEGCNKYCSFCVVPYTRGEEVSRPVDDVLFEIAQLAEQGVREVNLLGQNVNAYRGPTHDGGICSFAELLRLVASIDGIDRLRFTTSHPIEFTDDIIDVYADTPELVSFLHLPVQSGSDRVLNLMKRNHTALEYKSIIRKLKKVRPNIQISSDFIVGFPGETDQDFEDTMNLIAQVNFDMSFSFIYSARPGTPAADMPDDVTEEEKKQRLYLLQQRINNQAAQFSRAMLGTEQRVLVEGPSKKDIMELTGRTETNRIVNFAGTPNMIGKFVDIKITDVYTNSLRGEVVRTEDEMGLRIVQSPQVVINRTRKEDELGVGHYQG.

The MTTase N-terminal domain occupies 3–120 (QKLHIKTWGC…LPEMINQIRG (118 aa)). [4Fe-4S] cluster contacts are provided by C12, C49, C83, C157, C161, and C164. The 233-residue stretch at 143–375 (RAEGPTAFVS…QQRINNQAAQ (233 aa)) folds into the Radical SAM core domain. The region spanning 378–441 (RAMLGTEQRV…TNSLRGEVVR (64 aa)) is the TRAM domain.

This sequence belongs to the methylthiotransferase family. MiaB subfamily. In terms of assembly, monomer. Requires [4Fe-4S] cluster as cofactor.

Its subcellular location is the cytoplasm. It catalyses the reaction N(6)-dimethylallyladenosine(37) in tRNA + (sulfur carrier)-SH + AH2 + 2 S-adenosyl-L-methionine = 2-methylsulfanyl-N(6)-dimethylallyladenosine(37) in tRNA + (sulfur carrier)-H + 5'-deoxyadenosine + L-methionine + A + S-adenosyl-L-homocysteine + 2 H(+). Functionally, catalyzes the methylthiolation of N6-(dimethylallyl)adenosine (i(6)A), leading to the formation of 2-methylthio-N6-(dimethylallyl)adenosine (ms(2)i(6)A) at position 37 in tRNAs that read codons beginning with uridine. The chain is tRNA-2-methylthio-N(6)-dimethylallyladenosine synthase from Histophilus somni (strain 129Pt) (Haemophilus somnus).